A 176-amino-acid chain; its full sequence is Xanthine-guanine phosphoribosyltransferase (176 aa).

5-phospho-alpha-D-ribose 1-diphosphate is bound by residues 51 to 52 (RG), arginine 88, and 111 to 119 (DDLVDSGKT). Arginine 88 provides a ligand contact to GMP. Residue aspartate 112 coordinates Mg(2+). Residues aspartate 115 and isoleucine 158 each coordinate guanine. 2 residues coordinate xanthine: aspartate 115 and isoleucine 158. Residues 115-119 (DSGKT) and 157-158 (WI) each bind GMP.

This sequence belongs to the purine/pyrimidine phosphoribosyltransferase family. XGPT subfamily. Homotetramer. Mg(2+) is required as a cofactor.

It localises to the cell inner membrane. It catalyses the reaction GMP + diphosphate = guanine + 5-phospho-alpha-D-ribose 1-diphosphate. The enzyme catalyses XMP + diphosphate = xanthine + 5-phospho-alpha-D-ribose 1-diphosphate. The catalysed reaction is IMP + diphosphate = hypoxanthine + 5-phospho-alpha-D-ribose 1-diphosphate. It participates in purine metabolism; GMP biosynthesis via salvage pathway; GMP from guanine: step 1/1. Its pathway is purine metabolism; XMP biosynthesis via salvage pathway; XMP from xanthine: step 1/1. Purine salvage pathway enzyme that catalyzes the transfer of the ribosyl-5-phosphate group from 5-phospho-alpha-D-ribose 1-diphosphate (PRPP) to the N9 position of the 6-oxopurines guanine and xanthine to form the corresponding ribonucleotides GMP (guanosine 5'-monophosphate) and XMP (xanthosine 5'-monophosphate), with the release of PPi. To a lesser extent, also acts on hypoxanthine. The protein is Xanthine-guanine phosphoribosyltransferase of Roseobacter denitrificans (strain ATCC 33942 / OCh 114) (Erythrobacter sp. (strain OCh 114)).